Reading from the N-terminus, the 207-residue chain is Large ribosomal subunit protein bL25 (207 aa).

The protein belongs to the bacterial ribosomal protein bL25 family. CTC subfamily. Part of the 50S ribosomal subunit; part of the 5S rRNA/L5/L18/L25 subcomplex. Contacts the 5S rRNA. Binds to the 5S rRNA independently of L5 and L18.

This is one of the proteins that binds to the 5S RNA in the ribosome where it forms part of the central protuberance. This Dictyoglomus turgidum (strain DSM 6724 / Z-1310) protein is Large ribosomal subunit protein bL25.